Here is a 66-residue protein sequence, read N- to C-terminus: Large ribosomal subunit protein bL35 (66 aa).

Over residues 1 to 16 (MPKQKTHRASAKRFKR) the composition is skewed to basic residues. The disordered stretch occupies residues 1-21 (MPKQKTHRASAKRFKRTGSGG).

This sequence belongs to the bacterial ribosomal protein bL35 family.

The protein is Large ribosomal subunit protein bL35 of Streptococcus pneumoniae serotype 2 (strain D39 / NCTC 7466).